We begin with the raw amino-acid sequence, 101 residues long: Therostasin (101 aa).

The first 19 residues, 1-19 (MRGLAVLLLVACFCSVAFG), serve as a signal peptide directing secretion. Antistasin-like domains follow at residues 21–46 (CENT…TCLC) and 49–75 (CNDA…FCTC).

As to expression, salivary glands.

The protein resides in the secreted. Functionally, potent inhibitor of factor Xa. It also inhibits trypsin in a weaker manner. The protein is Therostasin of Theromyzon tessulatum (Duck leech).